The sequence spans 417 residues: Cobalamin binding intrinsic factor (417 aa).

An N-terminal signal peptide occupies residues 1-18 (MAWLSFYLLNVLWAVAGT). Cystine bridges form between cysteine 26-cysteine 246, cysteine 103-cysteine 288, and cysteine 143-cysteine 182. Residue aspartate 171 coordinates cob(II)alamin. Position 191 is a phosphoserine (serine 191). Asparagine 209 is a glycosylation site (N-linked (GlcNAc...) asparagine). Cob(II)alamin is bound by residues aspartate 222 and glutamine 270. 2 N-linked (GlcNAc...) asparagine glycosylation sites follow: asparagine 311 and asparagine 330. Cob(II)alamin is bound by residues 365 to 370 (SWGLIV) and 386 to 395 (WEFLSGKTPL). The N-linked (GlcNAc...) asparagine glycan is linked to asparagine 413.

It belongs to the eukaryotic cobalamin transport proteins family. Interacts with CUBN (via CUB domains). Post-translationally, the N-terminus is blocked. Gastric mucosa.

The protein resides in the secreted. In terms of biological role, promotes absorption of the essential vitamin cobalamin (Cbl) in the ileum. After interaction with CUBN, the CBLIF-cobalamin complex is internalized via receptor-mediated endocytosis. In Rattus norvegicus (Rat), this protein is Cobalamin binding intrinsic factor.